A 747-amino-acid polypeptide reads, in one-letter code: Sushi domain-containing protein 1 (747 aa).

The signal sequence occupies residues 1 to 29 (MGRGPWDAGPSRRLLPLLLLLGLARGAAG). The Extracellular segment spans residues 30 to 721 (APGPDGLDVC…WAQVKDSSLM (692 aa)). Residues 35–72 (GLDVCATCHEHATCQQREGKKICICNYGFVGNGRTQCV) enclose the EGF-like 1 domain. 5 disulfides stabilise this stretch: C39-C48, C42-C57, C59-C71, C77-C91, and C85-C100. In terms of domain architecture, EGF-like 2; calcium-binding spans 73–112 (DKNECQFGATLVCGNHTSCHNTPGGFYCICLEGYRATNNN). Residues N87 and N112 are each glycosylated (N-linked (GlcNAc...) asparagine). Residues 125–162 (DIDECEVSGLCRHGGRCVNTHGSFECYCMDGYLPRNGP) form the EGF-like 3; calcium-binding domain. 6 cysteine pairs are disulfide-bonded: C129–C141, C135–C150, C179–C221, C206–C234, C239–C281, and C266–C294. Sushi domains are found at residues 177-236 (IDCG…HCQE) and 237-296 (INCG…TCTE). N-linked (GlcNAc...) asparagine glycosylation is present at N193. Residue N253 is glycosylated (N-linked (GlcNAc...) asparagine). Residues N348, N367, and N563 are each glycosylated (N-linked (GlcNAc...) asparagine). The chain crosses the membrane as a helical span at residues 722–742 (LLQMAGVGLGSLAVVIILTFL). Residues 743 to 747 (SFSAV) lie on the Cytoplasmic side of the membrane.

It localises to the membrane. This is Sushi domain-containing protein 1 (SUSD1) from Homo sapiens (Human).